The chain runs to 215 residues: 7-methyl-GTP pyrophosphatase (215 aa).

The active-site Proton acceptor is the aspartate 79.

The protein belongs to the Maf family. YceF subfamily. The cofactor is a divalent metal cation.

It localises to the cytoplasm. The enzyme catalyses N(7)-methyl-GTP + H2O = N(7)-methyl-GMP + diphosphate + H(+). Functionally, nucleoside triphosphate pyrophosphatase that hydrolyzes 7-methyl-GTP (m(7)GTP). May have a dual role in cell division arrest and in preventing the incorporation of modified nucleotides into cellular nucleic acids. The polypeptide is 7-methyl-GTP pyrophosphatase (Burkholderia thailandensis (strain ATCC 700388 / DSM 13276 / CCUG 48851 / CIP 106301 / E264)).